The chain runs to 238 residues: uncharacterized protein (238 aa).

An N-terminal signal peptide occupies residues 1–28 (MSRNSRGSGRYVFVVLACVFGYTRAVHA).

This is an uncharacterized protein from Treponema pallidum (strain Nichols).